Consider the following 388-residue polypeptide: Probable protein phosphatase 2C 43 (388 aa).

Positions glutamate 53–isoleucine 352 constitute a PPM-type phosphatase domain. Mn(2+)-binding residues include aspartate 84, glycine 85, aspartate 284, and aspartate 343.

This sequence belongs to the PP2C family. It depends on Mg(2+) as a cofactor. Requires Mn(2+) as cofactor.

The enzyme catalyses O-phospho-L-seryl-[protein] + H2O = L-seryl-[protein] + phosphate. It catalyses the reaction O-phospho-L-threonyl-[protein] + H2O = L-threonyl-[protein] + phosphate. This Oryza sativa subsp. japonica (Rice) protein is Probable protein phosphatase 2C 43.